The following is a 354-amino-acid chain: Type II methylase M.HgiDII (354 aa).

The SAM-dependent MTase C5-type domain maps to 3-344 (GAVIDLFCGV…KSIKRFLEGL (342 aa)). Cys-79 is an active-site residue.

This sequence belongs to the class I-like SAM-binding methyltransferase superfamily. C5-methyltransferase family.

It catalyses the reaction a 2'-deoxycytidine in DNA + S-adenosyl-L-methionine = a 5-methyl-2'-deoxycytidine in DNA + S-adenosyl-L-homocysteine + H(+). Its function is as follows. A methylase that recognizes the double-stranded sequence 5'-GTCGAC-3', methylates C-? on both strands and protects the DNA from cleavage by the HgiDII endonuclease. This is Type II methylase M.HgiDII from Herpetosiphon aurantiacus (Herpetosiphon giganteus).